The primary structure comprises 101 residues: NADH-quinone oxidoreductase subunit K (101 aa).

Helical transmembrane passes span 4–24 (LGHY…GIFL), 30–50 (IVLL…FVAF), and 61–81 (VFVF…LAIL).

The protein belongs to the complex I subunit 4L family. As to quaternary structure, NDH-1 is composed of 14 different subunits. Subunits NuoA, H, J, K, L, M, N constitute the membrane sector of the complex.

Its subcellular location is the cell inner membrane. The catalysed reaction is a quinone + NADH + 5 H(+)(in) = a quinol + NAD(+) + 4 H(+)(out). Its function is as follows. NDH-1 shuttles electrons from NADH, via FMN and iron-sulfur (Fe-S) centers, to quinones in the respiratory chain. The immediate electron acceptor for the enzyme in this species is believed to be ubiquinone. Couples the redox reaction to proton translocation (for every two electrons transferred, four hydrogen ions are translocated across the cytoplasmic membrane), and thus conserves the redox energy in a proton gradient. In Leptothrix cholodnii (strain ATCC 51168 / LMG 8142 / SP-6) (Leptothrix discophora (strain SP-6)), this protein is NADH-quinone oxidoreductase subunit K.